We begin with the raw amino-acid sequence, 191 residues long: Cytochrome b-245 light chain (191 aa).

Over 2–7 (GQIEWA) the chain is Cytoplasmic. The chain crosses the membrane as a helical span at residues 8 to 30 (MWANEQALASGLILITGGIVATA). Residues 31–35 (GQFTQ) are Extracellular-facing. The chain crosses the membrane as a helical span at residues 36–53 (WYLGAYSIAAGVLVCLLE). Topologically, residues 54–69 (YPRGKRSKGSTMERCG) are cytoplasmic. Residues 70–80 (QKYLTRVVKLF) lie within the membrane without spanning it. At 81–86 (GPLTRN) the chain is on the cytoplasmic side. Residues 87 to 104 (YYIRAFLHLGLAVPAGFL) form a helical membrane-spanning segment. A topological domain (extracellular) is located at residue Leu-105. Residues 106 to 126 (ATILGTACLAIASGIYLLAAI) form a helical membrane-spanning segment. Topologically, residues 127-191 (RGEQWSPIEP…NPMPVNDEVV (65 aa)) are cytoplasmic. The segment at 134–191 (IEPKPKERPQIGGTIKQPPSNPPPRPPAEARKKLSEEAAGVPTGGPQENPMPVNDEVV) is disordered. Thr-147 carries the post-translational modification Phosphothreonine. Residue Lys-149 forms a Glycyl lysine isopeptide (Lys-Gly) (interchain with G-Cter in ubiquitin) linkage. The residue at position 168 (Ser-168) is a Phosphoserine.

This sequence belongs to the p22phox family. As to quaternary structure, component of the phagocyte NADPH oxidase core complex/cytochrome b558 complex, composed of CYBB (heavy chain (beta)) and CYBA (light chain (alpha)). Component of the phagocyte NADPH oxidase complex composed of an obligatory core heterodimer formed by the membrane proteins CYBA and CYBB and the cytosolic regulatory subunits NCF1/p47-phox, NCF2/p67-phox, NCF4/p40-phox and the small GTPase RAC1 or RAC2. Interacts with NCF1 (via SH3 domain). Interacts with SH3PXD2A. Interacts with DUOX1, DUOX2 and TPO. Interacts with NOX4; this interaction mediates superoxide generation. Interacts with calprotectin (S100A8/9). Interacts with GBP7. Interacts with NOXO1. Forms a heterodimer with NOX3 and is essential for activity and cell membrane localization of NOX3. Interacts with NOX1. Phosphorylation at Thr-147 enhances NADPH oxidase activity by promoting NCF1/p47-phox binding. Post-translationally, ubiquitinated at Lys-149 likely by RNF145.

It is found in the cell membrane. Functionally, subunit of NADPH oxidase complexes that is required for the NADPH oxidase activity that generates, in various cell types, superoxide from molecular oxygen utilizing NADPH as an electron donor. Subunit of the phagocyte NADPH oxidase complex that mediates the transfer of electrons from cytosolic NADPH to O2 to produce the superoxide anion (O2(-)). In the activated complex, electrons are first transferred from NADPH to flavin adenine dinucleotide (FAD) and subsequently transferred via two heme molecules to molecular oxygen, producing superoxide through an outer-sphere reaction. Activation of the NADPH oxidase complex is initiated by the assembly of cytosolic subunits of the NADPH oxidase complex with the core NADPH oxidase complex to form a complex at the plasma membrane or phagosomal membrane. This activation process is initiated by phosphorylation dependent binding of the cytosolic NCF1/p47-phox subunit to the C-terminus of CYBA/p22-phox. Aassociates with NOX3 to form a functional NADPH oxidase constitutively generating superoxide. The chain is Cytochrome b-245 light chain from Bison bison (American bison).